The sequence spans 366 residues: Flagellar P-ring protein (366 aa).

The first 20 residues, 1–20 (MVIKFLSALILLLVTTAAQA), serve as a signal peptide directing secretion.

The protein belongs to the FlgI family. In terms of assembly, the basal body constitutes a major portion of the flagellar organelle and consists of four rings (L,P,S, and M) mounted on a central rod.

The protein resides in the periplasm. The protein localises to the bacterial flagellum basal body. Its function is as follows. Assembles around the rod to form the L-ring and probably protects the motor/basal body from shearing forces during rotation. In Escherichia coli (strain SE11), this protein is Flagellar P-ring protein.